We begin with the raw amino-acid sequence, 97 residues long: UPF0390 protein CNBD1430 (97 aa).

Disordered regions lie at residues 1–57 and 75–97; these read MAQG…INNS and RNVG…GKSR. The span at 29-46 shows a compositional bias: basic and acidic residues; sequence GKREVAPKDRQRVLERSQ. The span at 48–57 shows a compositional bias: polar residues; it reads KQLSSKINNS.

Belongs to the UPF0390 family.

This chain is UPF0390 protein CNBD1430, found in Cryptococcus neoformans var. neoformans serotype D (strain B-3501A) (Filobasidiella neoformans).